A 145-amino-acid polypeptide reads, in one-letter code: D-aminoacyl-tRNA deacylase (145 aa).

The Gly-cisPro motif, important for rejection of L-amino acids motif lies at 137 to 138; it reads GP.

It belongs to the DTD family. As to quaternary structure, homodimer.

It localises to the cytoplasm. The catalysed reaction is glycyl-tRNA(Ala) + H2O = tRNA(Ala) + glycine + H(+). The enzyme catalyses a D-aminoacyl-tRNA + H2O = a tRNA + a D-alpha-amino acid + H(+). An aminoacyl-tRNA editing enzyme that deacylates mischarged D-aminoacyl-tRNAs. Also deacylates mischarged glycyl-tRNA(Ala), protecting cells against glycine mischarging by AlaRS. Acts via tRNA-based rather than protein-based catalysis; rejects L-amino acids rather than detecting D-amino acids in the active site. By recycling D-aminoacyl-tRNA to D-amino acids and free tRNA molecules, this enzyme counteracts the toxicity associated with the formation of D-aminoacyl-tRNA entities in vivo and helps enforce protein L-homochirality. The protein is D-aminoacyl-tRNA deacylase of Pectobacterium carotovorum subsp. carotovorum (strain PC1).